The primary structure comprises 139 residues: Large ribosomal subunit protein uL22c (139 aa).

Belongs to the universal ribosomal protein uL22 family. As to quaternary structure, part of the 50S ribosomal subunit.

It localises to the plastid. Its subcellular location is the chloroplast. Its function is as follows. This protein binds specifically to 23S rRNA. The globular domain of the protein is located near the polypeptide exit tunnel on the outside of the subunit, while an extended beta-hairpin is found that lines the wall of the exit tunnel in the center of the 70S ribosome. The protein is Large ribosomal subunit protein uL22c (rpl22) of Cycas taitungensis (Prince sago).